Reading from the N-terminus, the 366-residue chain is 3-dehydroquinate synthase (366 aa).

NAD(+) is bound by residues 74–79, 108–112, 132–133, Lys-144, Lys-153, and 171–174; these read SGEAAK, GVVGD, TT, and FLRT. The Zn(2+) site is built by Glu-186, His-249, and His-266.

Belongs to the sugar phosphate cyclases superfamily. Dehydroquinate synthase family. The cofactor is Co(2+). Zn(2+) serves as cofactor. Requires NAD(+) as cofactor.

The protein localises to the cytoplasm. It catalyses the reaction 7-phospho-2-dehydro-3-deoxy-D-arabino-heptonate = 3-dehydroquinate + phosphate. It participates in metabolic intermediate biosynthesis; chorismate biosynthesis; chorismate from D-erythrose 4-phosphate and phosphoenolpyruvate: step 2/7. In terms of biological role, catalyzes the conversion of 3-deoxy-D-arabino-heptulosonate 7-phosphate (DAHP) to dehydroquinate (DHQ). This is 3-dehydroquinate synthase from Geobacillus kaustophilus (strain HTA426).